Reading from the N-terminus, the 783-residue chain is Zinc finger protein 107 (783 aa).

The segment at 76-98 (FQCNKYVKVFDKFSNSNRYKRRH) adopts a C2H2-type 1; atypical zinc-finger fold. 3 consecutive C2H2-type zinc fingers follow at residues 104–126 (FKCKECSKSFCVLSQLTQHRRIH), 132–154 (YKCEECGKAFNWFSTLTKHKRIH), and 160–182 (YKCEECGKAFNQSSQLTRHKIIH). Lys186 is covalently cross-linked (Glycyl lysine isopeptide (Lys-Gly) (interchain with G-Cter in SUMO2)). Residues 188-210 (NKCEECGKAFKQASHLTIHKIIH) form a C2H2-type 5 zinc finger. The segment at 216-238 (YKYEECGKVFSQSSHLTTQKILH) adopts a C2H2-type 6; atypical zinc-finger fold. The C2H2-type 7 zinc finger occupies 244–266 (YKCKECGKAFNLFSNLTNHKRIH). The C2H2-type 8; atypical zinc finger occupies 272 to 294 (YKCKECGRAFNISSNLNKQEKIH). A C2H2-type 9; atypical zinc finger spans residues 300-322 (NKCEECDKAFNRSLKLTAHKKIL). 2 C2H2-type zinc fingers span residues 328 to 350 (YKCEECGKVFNQFSTLTRHKIIH) and 356 to 378 (YKCKECGKAFNQSSNLTEHKKIH). A C2H2-type 12; atypical zinc finger spans residues 384-406 (YKCEECGKAFNQHSNLINHRKIY). C2H2-type zinc fingers lie at residues 412-434 (YKCEECGKAFNRSSTLTRHKKIH), 440-462 (YKCEECDRAFSQSSNLTEHKKIH), 468-490 (YKCEECGKAFNRFSTLTKHKRIH), and 496-518 (YKCEECGKAFNQSYQLTRHKIVH). The C2H2-type 17; atypical zinc-finger motif lies at 524–546 (NKCEEFGKAFKQSSHRTIHKIIH). The C2H2-type 18; atypical zinc-finger motif lies at 552–574 (YKCEEHGKVFNQSSNLTTQKIIH). The C2H2-type 19; atypical zinc finger occupies 580–602 (YKFEEHGKAFNLFSNITNHKIIY). 5 consecutive C2H2-type zinc fingers follow at residues 608–630 (HKCEECGKAYNRFSNLTIHKRIH), 636–658 (YQCAECGKAFNCSSTLNRHKIIH), 664–686 (YKCKECGKAFNLSSTLTAHKKIH), 692–714 (YKCEECGKAFNQSSNLTTHKKIH), and 720–742 (YKCEECGKSFNQFSSLNIHKIIH). A C2H2-type 25; atypical zinc finger spans residues 748 to 770 (YKCGDYGRAFNLSSNLTTHKKIH).

The protein belongs to the krueppel C2H2-type zinc-finger protein family. Expressed in brain, heart, skeletal muscle, kidney and pancreas. Weakly expressed in aorta, liver and lung.

Its subcellular location is the nucleus. Functionally, may be involved in transcriptional regulation. This chain is Zinc finger protein 107 (ZNF107), found in Homo sapiens (Human).